The chain runs to 1155 residues: DNA-directed RNA polymerase subunit beta (1155 aa).

The protein belongs to the RNA polymerase beta chain family. As to quaternary structure, the RNAP catalytic core consists of 2 alpha, 1 beta, 1 beta' and 1 omega subunit. When a sigma factor is associated with the core the holoenzyme is formed, which can initiate transcription.

It carries out the reaction RNA(n) + a ribonucleoside 5'-triphosphate = RNA(n+1) + diphosphate. DNA-dependent RNA polymerase catalyzes the transcription of DNA into RNA using the four ribonucleoside triphosphates as substrates. The polypeptide is DNA-directed RNA polymerase subunit beta (Thermobifida fusca (strain YX)).